Reading from the N-terminus, the 349-residue chain is Homoserine O-succinyltransferase (349 aa).

The active-site Acyl-thioester intermediate is C146. Substrate is bound by residues K167 and S196. H239 (proton acceptor) is an active-site residue. The active site involves E241. A substrate-binding site is contributed by R253.

It belongs to the MetA family.

The protein resides in the cytoplasm. It carries out the reaction L-homoserine + succinyl-CoA = O-succinyl-L-homoserine + CoA. It functions in the pathway amino-acid biosynthesis; L-methionine biosynthesis via de novo pathway; O-succinyl-L-homoserine from L-homoserine: step 1/1. In terms of biological role, transfers a succinyl group from succinyl-CoA to L-homoserine, forming succinyl-L-homoserine. In vitro, can also use glutaryl-CoA as acyl donor. The protein is Homoserine O-succinyltransferase of Thiobacillus denitrificans (strain ATCC 25259 / T1).